A 510-amino-acid polypeptide reads, in one-letter code: Bifunctional purine biosynthesis protein PurH (510 aa).

Residues 1-142 (MRALLSVSDK…KNYKDVMVLC (142 aa)) form the MGS-like domain.

This sequence belongs to the PurH family.

It carries out the reaction (6R)-10-formyltetrahydrofolate + 5-amino-1-(5-phospho-beta-D-ribosyl)imidazole-4-carboxamide = 5-formamido-1-(5-phospho-D-ribosyl)imidazole-4-carboxamide + (6S)-5,6,7,8-tetrahydrofolate. The catalysed reaction is IMP + H2O = 5-formamido-1-(5-phospho-D-ribosyl)imidazole-4-carboxamide. Its pathway is purine metabolism; IMP biosynthesis via de novo pathway; 5-formamido-1-(5-phospho-D-ribosyl)imidazole-4-carboxamide from 5-amino-1-(5-phospho-D-ribosyl)imidazole-4-carboxamide (10-formyl THF route): step 1/1. The protein operates within purine metabolism; IMP biosynthesis via de novo pathway; IMP from 5-formamido-1-(5-phospho-D-ribosyl)imidazole-4-carboxamide: step 1/1. The polypeptide is Bifunctional purine biosynthesis protein PurH (Campylobacter jejuni subsp. jejuni serotype O:2 (strain ATCC 700819 / NCTC 11168)).